Here is a 295-residue protein sequence, read N- to C-terminus: Non-selective voltage-gated ion channel VDAC2 (295 aa).

Residues K24 and K32 each contribute to the ATP site. The residue at position 32 (K32) is an N6-acetyllysine; alternate. N6-succinyllysine; alternate is present on K32. Residue K32 forms a Glycyl lysine isopeptide (Lys-Gly) (interchain with G-Cter in ubiquitin); alternate linkage. 2 consecutive transmembrane segments (beta stranded) span residues 38 to 45 (LVKLDVKT) and 51 to 60 (VEFSTSGSSN). A Glycyl lysine isopeptide (Lys-Gly) (interchain with G-Cter in ubiquitin) cross-link involves residue K65. The beta stranded transmembrane segment at 66–76 (VSGTLETKYKW) threads the bilayer. Residue Y79 is modified to Phosphotyrosine. 3 consecutive transmembrane segments (beta stranded) span residues 81–88 (LTFTEKWN), 92–100 (TLGTEIAIE), and 107–116 (LKLTFDTTFS). T119 is modified (phosphothreonine). N6-acetyllysine; alternate is present on K121. K121 is covalently cross-linked (Glycyl lysine isopeptide (Lys-Gly) (interchain with G-Cter in ubiquitin); alternate). A Glycyl lysine isopeptide (Lys-Gly) (interchain with G-Cter in ubiquitin) cross-link involves residue K122. The next 4 membrane-spanning stretches (beta stranded) occupy residues 122 to 131 (KSGKIKSAYK), 135 to 144 (INLGCDVDFD), 148 to 157 (PAIHGSAVFG), and 161 to 170 (WLAGYQMTFD). K173 participates in a covalent cross-link: Glycyl lysine isopeptide (Lys-Gly) (interchain with G-Cter in ubiquitin). The next 6 membrane-spanning stretches (beta stranded) occupy residues 177-187 (TRSNFAVGYRT), 190-197 (FQLHTNVN), 201-210 (EFGGSIYQKV), 214-222 (FDTSVNLAW), 229-238 (TRFGIAAKYQ), and 243-250 (ASISAKVN). S252 is subject to Phosphoserine. NAD(+) is bound by residues 254-256 (LIG) and 272-276 (SALVD). 2 consecutive transmembrane segments (beta stranded) span residues 254 to 263 (LIGVGYTQTL) and 267 to 275 (VKLTLSALV). K278 is subject to N6-acetyllysine; alternate. K278 is covalently cross-linked (Glycyl lysine isopeptide (Lys-Gly) (interchain with G-Cter in ubiquitin); alternate). Residues 285-295 (HKLGLALELEA) form a beta stranded membrane-spanning segment.

It belongs to the eukaryotic mitochondrial porin family. In terms of assembly, monomer, homodimer and higher order oligomers; formation of higher order structures is necessary for scramblase activity. Interacts with ARMC12 in a TBC1D21-dependent manner. Interacts with KLC3. Interacts with SPATA33. Interacts with PPP3CC in a SPATA33-dependent manner. Post-translationally, ubiquitinated by PRKN during mitophagy, leading to its degradation and enhancement of mitophagy. Deubiquitinated by USP30. As to expression, highest levels of expression detected in testis, less but still abundant expression in heart, kidney, brain, and skeletal muscle. Expressed in the sperm midpiece (at protein level).

Its subcellular location is the mitochondrion outer membrane. It localises to the membrane. It carries out the reaction chloride(in) = chloride(out). It catalyses the reaction K(+)(in) = K(+)(out). The enzyme catalyses a 1,2-diacyl-sn-glycero-3-phospho-L-serine(in) = a 1,2-diacyl-sn-glycero-3-phospho-L-serine(out). The catalysed reaction is a 1,2-diacyl-sn-glycero-3-phosphocholine(in) = a 1,2-diacyl-sn-glycero-3-phosphocholine(out). It carries out the reaction a 1,2-diacyl-sn-glycero-3-phospho-(1D-myo-inositol)(in) = a 1,2-diacyl-sn-glycero-3-phospho-(1D-myo-inositol)(out). Non-selective voltage-gated ion channel that mediates the transport of anions and cations through the mitochondrion outer membrane and plasma membrane. The channel adopts an open conformation at zero mV and a closed conformation at both positive and negative potentials. There are two populations of channels; the main that functions in a lower open-state conductance with lower ion selectivity, that switch, in a voltage-dependent manner, from the open to a low-conducting 'closed' state and the other that has a normal ion selectivity in the typical high conductance, 'open' state. Binds various lipids, including the sphingolipid ceramide, the phospholipid phosphatidylcholine, and the sterols cholesterol and oxysterol. Binding of ceramide promotes the mitochondrial outer membrane permeabilization (MOMP) apoptotic pathway. Its function is as follows. Catalyzes the scrambling of phospholipids across the outer mitochondrial membrane; the mechanism is unrelated to channel activity and is capable of translocating both anionic and zwitterionic phospholipids. This is Non-selective voltage-gated ion channel VDAC2 from Mus musculus (Mouse).